The primary structure comprises 325 residues: GTP 3',8-cyclase (325 aa).

In terms of domain architecture, Radical SAM core spans 4–219 (TYQREINYLR…DAISAKLGPL (216 aa)). Position 13 (Arg13) interacts with GTP. The [4Fe-4S] cluster site is built by Cys20 and Cys24. Tyr26 contacts S-adenosyl-L-methionine. Cys27 contributes to the [4Fe-4S] cluster binding site. GTP is bound at residue Arg63. S-adenosyl-L-methionine is bound at residue Gly67. Thr94 contacts GTP. Ser118 is a binding site for S-adenosyl-L-methionine. GTP is bound at residue Lys155. Residue Met189 coordinates S-adenosyl-L-methionine. Cys254 and Cys257 together coordinate [4Fe-4S] cluster. GTP is bound at residue 259–261 (RLR). Cys271 contacts [4Fe-4S] cluster.

Belongs to the radical SAM superfamily. MoaA family. As to quaternary structure, monomer and homodimer. It depends on [4Fe-4S] cluster as a cofactor.

It carries out the reaction GTP + AH2 + S-adenosyl-L-methionine = (8S)-3',8-cyclo-7,8-dihydroguanosine 5'-triphosphate + 5'-deoxyadenosine + L-methionine + A + H(+). The protein operates within cofactor biosynthesis; molybdopterin biosynthesis. Catalyzes the cyclization of GTP to (8S)-3',8-cyclo-7,8-dihydroguanosine 5'-triphosphate. This is GTP 3',8-cyclase from Pelotomaculum thermopropionicum (strain DSM 13744 / JCM 10971 / SI).